The following is a 312-amino-acid chain: Olfactory receptor 2T8 (312 aa).

Residues 1–26 are Extracellular-facing; it reads MENGSYTSYFILLGLFNHTRAHQVLF. 2 N-linked (GlcNAc...) asparagine glycosylation sites follow: Asn3 and Asn17. The chain crosses the membrane as a helical span at residues 27 to 47; that stretch reads MMVLSIVLTSLFGNSLMILLI. Over 48 to 55 the chain is Cytoplasmic; the sequence is HWDHRLHT. The chain crosses the membrane as a helical span at residues 56 to 76; sequence PMYFLLSQLSLMDVMLVSTTV. Topologically, residues 77–96 are extracellular; sequence PKMAADYLTGSKAISRAGCG. An intrachain disulfide couples Cys95 to Cys177. Residues 97-117 form a helical membrane-spanning segment; that stretch reads AQIFFLPTLGGGECFLLAAMA. The Cytoplasmic portion of the chain corresponds to 118 to 143; the sequence is YDRYAAVCHPLRYPTLMSWQLCLRMN. A helical membrane pass occupies residues 144–164; the sequence is LSCWLLGAADGLLQAVATLSF. The Extracellular segment spans residues 165–201; it reads PYCGAHEIDHFFCETPVLVRLACADTSVFENAMYICC. A helical membrane pass occupies residues 202-222; that stretch reads VLMLLVPFSLILSSYGLILAA. Over 223-234 the chain is Cytoplasmic; that stretch reads VLHMRSTEARKK. The helical transmembrane segment at 235–255 threads the bilayer; sequence AFATCSSHVAVVGLFYGAAIF. The Extracellular portion of the chain corresponds to 256-269; that stretch reads TYMRPKSHRSTNHD. A helical membrane pass occupies residues 270–290; sequence KVVSAFYTMFTPLLNPLIYSV. Residues 291–312 are Cytoplasmic-facing; the sequence is KNSEVKGALTRCMGRCVALSRE.

This sequence belongs to the G-protein coupled receptor 1 family.

It is found in the cell membrane. Its function is as follows. Odorant receptor. The chain is Olfactory receptor 2T8 (OR2T8) from Homo sapiens (Human).